The primary structure comprises 1449 residues: Disease resistance protein RPP5 (1449 aa).

The TIR domain occupies 10–178; sequence RRYDVFPSFS…KISNDVSNKL (169 aa). Glu85 is a catalytic residue. Residues 192 to 446 enclose the NB-ARC domain; the sequence is EAHIEAIKSV…IACLFNGFEV (255 aa). LRR repeat units follow at residues 549–573, 574–595, 597–618, 619–642, 644–665, 687–710, 712–732, 733–755, 756–779, 802–825, 826–849, 915–939, 941–962, 963–985, 986–1011, 1028–1052, 1053–1077, 1096–1119, and 1120–1143; these read MRNL…VYLP, LKLR…TFKA, YLVN…TLPL, GSLK…SNAR, LEEL…IQNA, MCNL…VYFP, KLRL…NFKV, EYLV…TQPL, GRLK…SLAI, AIKL…DLNL, ESLE…KMGC, LGSL…SKAT, LKHL…IGNL, QKLV…DVNL, SSLE…SIKW, ATKL…IGNL, QNLR…NLSS, STNI…IEDF, and TRLR…IFRL.

Interacts with RSH1.

The enzyme catalyses NAD(+) + H2O = ADP-D-ribose + nicotinamide + H(+). Functionally, TIR-NB-LRR receptor-like protein that confers resistance to the pathogen Hyaloperonospora arabidopsis isolate Noco2 (downy mildew disease). Confers resistance to H.arabidopsis isolates Emoy2, Emwa1 and Noco2. The polypeptide is Disease resistance protein RPP5 (Arabidopsis thaliana (Mouse-ear cress)).